Reading from the N-terminus, the 655-residue chain is Probable potassium transport system protein Kup (655 aa).

A run of 12 helical transmembrane segments spans residues 19-39 (GLLI…LYVM), 42-62 (IAGG…CVFW), 102-122 (VWPA…TPPI), 132-152 (LIFN…VMLF), 161-181 (IVGK…ATLG), 214-234 (SGFW…ALYS), 246-266 (ISWI…GAWI), 282-302 (IMPE…AIIA), 338-358 (LFIP…VLWF), 370-390 (LAIN…LLII), 395-415 (FIWV…FLVA), and 420-440 (FFHG…IMII).

This sequence belongs to the HAK/KUP transporter (TC 2.A.72) family.

It localises to the cell inner membrane. The catalysed reaction is K(+)(in) + H(+)(in) = K(+)(out) + H(+)(out). Transport of potassium into the cell. Likely operates as a K(+):H(+) symporter. This chain is Probable potassium transport system protein Kup, found in Cytophaga hutchinsonii (strain ATCC 33406 / DSM 1761 / CIP 103989 / NBRC 15051 / NCIMB 9469 / D465).